A 1234-amino-acid polypeptide reads, in one-letter code: Chromosome-associated kinesin KIF4B (1234 aa).

Residues 9-336 form the Kinesin motor domain; it reads PVRVALRCRP…LRYADRARKI (328 aa). 88–95 provides a ligand contact to ATP; the sequence is GQTGSGKT. A coiled-coil region spans residues 350 to 999; the sequence is ELNHLKQQVQ…IKQKLILLQV (650 aa). Ser-394 is subject to Phosphoserine. Disordered regions lie at residues 494–513 and 712–737; these read EEAQ…AFTT and KRLK…HGKE. Over residues 498–513 the composition is skewed to polar residues; it reads VETSPETSRSSDAFTT. The interval 663-1234 is interaction with PRC1; that stretch reads QWKQKKDKEV…GCSPIEEEAH (572 aa). The segment covering 713–737 has biased composition (basic and acidic residues); it reads RLKDALQKQREVTDKRKETQSHGKE. Residues 793–798 carry the Nuclear localization signal motif; it reads PKLRKC. Thr-799 is modified (phosphothreonine). 6 positions are modified to phosphoserine: Ser-801, Ser-951, Ser-1001, Ser-1013, Ser-1017, and Ser-1028. The interval 1000 to 1234 is globular; it reads ASRQKHLPND…GCSPIEEEAH (235 aa). Disordered stretches follow at residues 1007–1030, 1052–1076, 1122–1143, and 1183–1234; these read PNDT…PSRV, VNEH…KPTK, RQQG…GSFK, and TAPA…EEAH. Residues 1056–1071 show a composition bias toward acidic residues; that stretch reads EDGDGDGDSDEGDDEE. Residues 1086–1144 form a CRD; required for [4Fe-4S] cluster binding and localization to the spindle midzone and midbody during anaphase and telophase region; sequence QGCSCKGWCGNKQCGCRKQKSDCGVDCSCDPTKCRNRQQGKDSLGTVEQTQDSEGSFKL. Phosphoserine is present on Ser-1128. Thr-1183 is subject to Phosphothreonine. Ser-1188 carries the phosphoserine modification. Residue Lys-1196 forms a Glycyl lysine isopeptide (Lys-Gly) (interchain with G-Cter in SUMO2) linkage. Ser-1227 is modified (phosphoserine).

Belongs to the TRAFAC class myosin-kinesin ATPase superfamily. Kinesin family. Chromokinesin subfamily. The cofactor is [2Fe-2S] cluster. [4Fe-4S] cluster is required as a cofactor. In terms of tissue distribution, specifically expressed in testis.

The protein localises to the nucleus matrix. It is found in the cytoplasm. Its subcellular location is the cytoskeleton. In terms of biological role, iron-sulfur (Fe-S) cluster binding motor protein that has a role in chromosome segregation during mitosis. Translocates PRC1 to the plus ends of interdigitating spindle microtubules during the metaphase to anaphase transition, an essential step for the formation of an organized central spindle midzone and midbody and for successful cytokinesis. May play a role in mitotic chromosomal positioning and bipolar spindle stabilization. This Homo sapiens (Human) protein is Chromosome-associated kinesin KIF4B (KIF4B).